Here is a 62-residue protein sequence, read N- to C-terminus: Large ribosomal subunit protein bL28 (62 aa).

A disordered region spans residues 1–23 (MARRCFVTGKSAKAGNARSHSMR).

Belongs to the bacterial ribosomal protein bL28 family.

In Brevibacillus brevis (strain 47 / JCM 6285 / NBRC 100599), this protein is Large ribosomal subunit protein bL28.